The primary structure comprises 163 residues: Allophycocyanin alpha-B chain (163 aa).

An N4-methylasparagine modification is found at Asn-71. Position 81 (Cys-81) interacts with (2R,3E)-phycocyanobilin.

Belongs to the phycobiliprotein family. As to quaternary structure, heterodimer of an alpha and a beta chain. In terms of processing, contains one covalently linked bilin chromophore.

It is found in the cellular thylakoid membrane. Its function is as follows. Light-harvesting photosynthetic bile pigment-protein from the phycobiliprotein complex. Allophycocyanin has a maximum absorption at approximately 650 nanometers. In Synechococcus sp. (strain ATCC 27144 / PCC 6301 / SAUG 1402/1) (Anacystis nidulans), this protein is Allophycocyanin alpha-B chain.